A 306-amino-acid polypeptide reads, in one-letter code: MSENARDPRLVVEILSEALPYIQRFSGKTVVVKYGGNAMTEDTLIDSFARDMVLMKEVGINPVVVHGGGPQIGELLERLNIESRFVGGMRVTDAETMDVVEMVLGGLVNKSIVNLINRSGGKAIGLTGKDGAQITARQLRVEHQTPEMTAPEIIDIGHVGEVEHIATDLIEMLAARDFIPVIAPIGVDAEGHSYNINADLVAGKVAEALGAEKLMLLTNVAGLMNAEGEVMTGLSTAQVDAMIGDGTIHGGMLPKIRCALEAVKGGVASSHIIDGRVPHATLLEIFTNAGVGTLITDTASDVSPED.

Substrate is bound by residues 68 to 69 (GG), arginine 90, and asparagine 195.

This sequence belongs to the acetylglutamate kinase family. ArgB subfamily.

It localises to the cytoplasm. The catalysed reaction is N-acetyl-L-glutamate + ATP = N-acetyl-L-glutamyl 5-phosphate + ADP. It functions in the pathway amino-acid biosynthesis; L-arginine biosynthesis; N(2)-acetyl-L-ornithine from L-glutamate: step 2/4. In terms of biological role, catalyzes the ATP-dependent phosphorylation of N-acetyl-L-glutamate. This Chromohalobacter salexigens (strain ATCC BAA-138 / DSM 3043 / CIP 106854 / NCIMB 13768 / 1H11) protein is Acetylglutamate kinase.